The chain runs to 508 residues: MFILTETAAGYAIFKAKDKLLKKRDALIEDLKSPEGASNLLKLQSFAKFESTVDALDNVSALVEGKVSSKLSSLLEGLSDSKSSTLVVADPKLGNAINKLPGLEFEIISDSSVQDLYRGIREHLSSLISGLAPSDLNAMSLGLSHSLSRHKLKFSPDKVDTMIVQAIALLDDLDKELNTYAMRVREWYGWHFPEMGKIIQDNLAYARVIKAMGMRTKCSETDFSDILPEEIEATLKSAAEISMGTEITEEDLDNIVMLADQVLELASYRAQLSEYLRNRMQAIAPNLTALVGELVGARLIAHAGSLMNLAKQPASTIQILGAEKALFRALKTKHSTPKYGLIYHASLVGQANSKNKGKIARVLATKAALSLRVDALSDKDTTNGNIGLENRIRVENRLRSLEGGKLLPLPTAPVQQSKVQINGTSAYSTATDAVTKDAEESQEDVEMDIVIEKKKKKSSKLKEADGESSKKEKKEKKDKKHKKSKRKSEESEDGESPKKKKKSKKSKD.

Ser33 carries the post-translational modification Phosphoserine. Residues 283 to 403 (IAPNLTALVG…VENRLRSLEG (121 aa)) enclose the Nop domain. Positions 426–508 (AYSTATDAVT…KKKKSKKSKD (83 aa)) are disordered. Residues 440–449 (ESQEDVEMDI) are compositionally biased toward acidic residues. Ser441 is subject to Phosphoserine. The span at 460-472 (KLKEADGESSKKE) shows a compositional bias: basic and acidic residues. Composition is skewed to basic residues over residues 473 to 486 (KKEK…KSKR) and 498 to 508 (KKKKKSKKSKD).

Belongs to the NOP5/NOP56 family.

It is found in the nucleus. The protein resides in the nucleolus. Functionally, required for pre-18S rRNA processing. May bind microtubules. The sequence is that of Nucleolar protein 58 (nop58) from Schizosaccharomyces pombe (strain 972 / ATCC 24843) (Fission yeast).